An 863-amino-acid chain; its full sequence is Oleate activated transcription factor 3 (863 aa).

The zn(2)-C6 fungal-type DNA-binding region spans 18–47; that stretch reads VCTNCKKRKSKCDRTKPCGTCVRLGDVDSC. Polar residues predominate over residues 52-63; that stretch reads DSSGQPESSPSL. A disordered region spans residues 52-99; it reads DSSGQPESSPSLNDADPLRKQSTPAERISPGFIKKRRSSQTRQDEDHW.

The protein belongs to the OAF3 family.

Its subcellular location is the cytoplasm. The protein localises to the nucleus. It localises to the mitochondrion. In terms of biological role, transcriptional inhibitor with a significantly increased number of target genes in response to oleate. This is Oleate activated transcription factor 3 (OAF3) from Saccharomyces cerevisiae (strain ATCC 204508 / S288c) (Baker's yeast).